The chain runs to 116 residues: MARNWSFRVIFVSAMWCALLKFATLEEPKDGYDYTEGCPFVVLGNGTHAKPAGCSHLCNGAPETLDDNMECYNVTEEVAKRMTPDIPYTCWLGWCSKGECKRDNRTEVCYRGSERE.

An N-terminal signal peptide occupies residues 1–25; sequence MARNWSFRVIFVSAMWCALLKFATL. Intrachain disulfides connect Cys-38–Cys-58, Cys-54–Cys-95, Cys-71–Cys-100, and Cys-90–Cys-109. N-linked (GlcNAc...) asparagine glycans are attached at residues Asn-45, Asn-73, and Asn-104.

It localises to the secreted. In terms of biological role, salivary chemokine-binding protein which binds to host chemokines CCL2, CCL3, CCL4, CCL8 and CCL18. This is Evasin P1180 from Amblyomma triste (Neotropical tick).